A 432-amino-acid chain; its full sequence is Small ribosomal subunit protein uS5m (432 aa).

A disordered region spans residues 110-130 (AGARKGRGKRTKKKKRKDLNR). Residues 113–127 (RKGRGKRTKKKKRKD) are compositionally biased toward basic residues. The S5 DRBM domain occupies 220–284 (FDTRILEVRN…NRAIHYLHYI (65 aa)).

It belongs to the universal ribosomal protein uS5 family. As to quaternary structure, component of the mitochondrial ribosome small subunit (28S) which comprises a 12S rRNA and about 30 distinct proteins.

It is found in the mitochondrion. The polypeptide is Small ribosomal subunit protein uS5m (Mrps5) (Mus musculus (Mouse)).